A 91-amino-acid chain; its full sequence is UPF0250 protein mma_3250 (91 aa).

The protein belongs to the UPF0250 family.

The sequence is that of UPF0250 protein mma_3250 from Janthinobacterium sp. (strain Marseille) (Minibacterium massiliensis).